The primary structure comprises 245 residues: Thiopurine S-methyltransferase (245 aa).

Residue W29–F40 participates in S-adenosyl-L-methionine binding. Substrate is bound at residue F40. The residue at position 58 (K58) is an N6-acetyllysine. S-adenosyl-L-methionine contacts are provided by L69, E90, and R152.

It belongs to the class I-like SAM-binding methyltransferase superfamily. TPMT family. Monomer.

It is found in the cytoplasm. The catalysed reaction is S-adenosyl-L-methionine + a thiopurine = S-adenosyl-L-homocysteine + a thiopurine S-methylether.. The sequence is that of Thiopurine S-methyltransferase (TPMT) from Bos taurus (Bovine).